The following is a 349-amino-acid chain: tRNA pseudouridine synthase D (349 aa).

Position 27 (F27) interacts with substrate. The Nucleophile role is filled by D80. N129 is a binding site for substrate. The 149-residue stretch at 155–303 (GVPNYFGAQR…VEAARRAMLL (149 aa)) folds into the TRUD domain. F329 lines the substrate pocket.

It belongs to the pseudouridine synthase TruD family.

It carries out the reaction uridine(13) in tRNA = pseudouridine(13) in tRNA. In terms of biological role, responsible for synthesis of pseudouridine from uracil-13 in transfer RNAs. In Citrobacter koseri (strain ATCC BAA-895 / CDC 4225-83 / SGSC4696), this protein is tRNA pseudouridine synthase D.